We begin with the raw amino-acid sequence, 379 residues long: Sulfate adenylyltransferase (379 aa).

Belongs to the sulfate adenylyltransferase family.

It catalyses the reaction sulfate + ATP + H(+) = adenosine 5'-phosphosulfate + diphosphate. It functions in the pathway sulfur metabolism; hydrogen sulfide biosynthesis; sulfite from sulfate: step 1/3. In Pyrococcus abyssi (strain GE5 / Orsay), this protein is Sulfate adenylyltransferase (sat).